Reading from the N-terminus, the 1172-residue chain is DNA-directed RNA polymerase subunit beta (1172 aa).

This sequence belongs to the RNA polymerase beta chain family. The RNAP catalytic core consists of 2 alpha, 1 beta, 1 beta' and 1 omega subunit. When a sigma factor is associated with the core the holoenzyme is formed, which can initiate transcription.

The enzyme catalyses RNA(n) + a ribonucleoside 5'-triphosphate = RNA(n+1) + diphosphate. Functionally, DNA-dependent RNA polymerase catalyzes the transcription of DNA into RNA using the four ribonucleoside triphosphates as substrates. This chain is DNA-directed RNA polymerase subunit beta, found in Mycobacterium sp. (strain JLS).